Reading from the N-terminus, the 980-residue chain is Ovochymase-2 (980 aa).

Residues 1–21 form the signal peptide; sequence MAETSVFSIMMLTVMTAVGRG. The propeptide at 22–49 is activation peptide; it reads ATDRPGRVSRCGERPSANASVTYNLLSR. A glycan (N-linked (GlcNAc...) asparagine) is linked at asparagine 39. The Peptidase S1 1 domain occupies 50 to 299; sequence IVGGTSAVKG…LLNWLSANLN (250 aa). The cysteines at positions 75 and 91 are disulfide-linked. The Charge relay system role is filled by histidine 90. The Ca(2+) site is built by valine 112 and glutamate 117. Aspartate 140 serves as the catalytic Charge relay system. 11 cysteine pairs are disulfide-bonded: cysteine 174/cysteine 244, cysteine 205/cysteine 223, cysteine 234/cysteine 263, cysteine 312/cysteine 342, cysteine 369/cysteine 388, cysteine 435/cysteine 462, cysteine 489/cysteine 510, cysteine 618/cysteine 634, cysteine 716/cysteine 779, cysteine 744/cysteine 757, and cysteine 769/cysteine 798. Serine 238 (charge relay system) is an active-site residue. 2 consecutive CUB domains span residues 312–425 and 435–547; these read CSTN…YQAV and CGSV…ISFV. Residues 593–822 enclose the Peptidase S1 2 domain; sequence IIKAEEAMPN…FIPWIMETIL (230 aa). A propeptide spans 593–980 (activation peptide); it reads IIKAEEAMPN…WLSYSFHNQN (388 aa). An N-linked (GlcNAc...) asparagine glycan is attached at asparagine 766. The tract at residues 835–863 is disordered; that stretch reads HHPLIPPDKLSQEKALLPDSPPSNDSSSS. Asparagine 858 and asparagine 932 each carry an N-linked (GlcNAc...) asparagine glycan.

Belongs to the peptidase S1 family. In terms of processing, the catalytically inactive 108 kDa form is processed both N- and C-terminally to give rise to catalytically active and inactive forms. As to expression, differentially expressed in the oviductal pars recta (PR) region.

It is found in the secreted. The catalysed reaction is Preferential cleavage at 371-Gly-Ser-Arg-|-Trp-374 of glycoprotein gp43 in Xenopus laevis coelemic egg envelope to yield gp41.. Mediates gamete interaction by affecting the vitelline coat. The sequence is that of Ovochymase-2 (OVCH2) from Rhinella arenarum (Argentine common toad).